The sequence spans 558 residues: Potassium-transporting ATPase potassium-binding subunit (558 aa).

11 helical membrane-spanning segments follow: residues 1–21 (MDTLAGILQVASVVLVLVLVH), 58–78 (WPAYLRAVLAFSLVGVLVVYG), 85–105 (FLPYALGLPAVPEGISFNTAV), 130–150 (GLAVQNFVSAAVGIAVAIALV), 179–199 (LSLVTAVVLIAGGVIQNFAGF), 245–265 (PTAWTSAFQVLLMLVIPFSLP), 279–299 (TAIAAVMATIAVASLTALTLF), 374–394 (GLYGMLVLAVIAVFVAGLLVG), 416–436 (ILVTPILVLVGTALSFAIPAV), 484–504 (ALGVAMLLGRFVPIVLVLALA), and 527–547 (FVGLLIGVTVIVTALTYFPVL).

Belongs to the KdpA family. As to quaternary structure, the system is composed of three essential subunits: KdpA, KdpB and KdpC.

The protein resides in the cell membrane. Its function is as follows. Part of the high-affinity ATP-driven potassium transport (or Kdp) system, which catalyzes the hydrolysis of ATP coupled with the electrogenic transport of potassium into the cytoplasm. This subunit binds the extracellular potassium ions and delivers the ions to the membrane domain of KdpB through an intramembrane tunnel. In Clavibacter sepedonicus (Clavibacter michiganensis subsp. sepedonicus), this protein is Potassium-transporting ATPase potassium-binding subunit.